The sequence spans 630 residues: DNA mismatch repair protein MutL (630 aa).

The span at 398–408 (TQTNAFGSMAT) shows a compositional bias: polar residues. A disordered region spans residues 398-425 (TQTNAFGSMATSRDSSRGSYSASESRQR).

This sequence belongs to the DNA mismatch repair MutL/HexB family.

In terms of biological role, this protein is involved in the repair of mismatches in DNA. It is required for dam-dependent methyl-directed DNA mismatch repair. May act as a 'molecular matchmaker', a protein that promotes the formation of a stable complex between two or more DNA-binding proteins in an ATP-dependent manner without itself being part of a final effector complex. This is DNA mismatch repair protein MutL from Shewanella baltica (strain OS185).